Here is a 111-residue protein sequence, read N- to C-terminus: Phosphoribosyl-ATP pyrophosphatase (111 aa).

The protein belongs to the PRA-PH family.

Its subcellular location is the cytoplasm. The catalysed reaction is 1-(5-phospho-beta-D-ribosyl)-ATP + H2O = 1-(5-phospho-beta-D-ribosyl)-5'-AMP + diphosphate + H(+). Its pathway is amino-acid biosynthesis; L-histidine biosynthesis; L-histidine from 5-phospho-alpha-D-ribose 1-diphosphate: step 2/9. This chain is Phosphoribosyl-ATP pyrophosphatase, found in Pseudomonas entomophila (strain L48).